Consider the following 285-residue polypeptide: Bifunctional protein FolD (285 aa).

Residues 164-166, Ser-189, and Ile-230 each bind NADP(+); that span reads GRS.

It belongs to the tetrahydrofolate dehydrogenase/cyclohydrolase family. As to quaternary structure, homodimer.

It catalyses the reaction (6R)-5,10-methylene-5,6,7,8-tetrahydrofolate + NADP(+) = (6R)-5,10-methenyltetrahydrofolate + NADPH. The enzyme catalyses (6R)-5,10-methenyltetrahydrofolate + H2O = (6R)-10-formyltetrahydrofolate + H(+). Its pathway is one-carbon metabolism; tetrahydrofolate interconversion. Catalyzes the oxidation of 5,10-methylenetetrahydrofolate to 5,10-methenyltetrahydrofolate and then the hydrolysis of 5,10-methenyltetrahydrofolate to 10-formyltetrahydrofolate. The protein is Bifunctional protein FolD of Oceanobacillus iheyensis (strain DSM 14371 / CIP 107618 / JCM 11309 / KCTC 3954 / HTE831).